We begin with the raw amino-acid sequence, 116 residues long: S-adenosylmethionine decarboxylase proenzyme (116 aa).

The active-site Schiff-base intermediate with substrate; via pyruvic acid is the Ser62. Pyruvic acid (Ser); by autocatalysis is present on Ser62. Residue His67 is the Proton acceptor; for processing activity of the active site. Catalysis depends on Cys82, which acts as the Proton donor; for catalytic activity.

This sequence belongs to the prokaryotic AdoMetDC family. Type 1 subfamily. In terms of assembly, heterotetramer of two alpha and two beta chains arranged as a dimer of alpha/beta heterodimers. The cofactor is pyruvate. Post-translationally, is synthesized initially as an inactive proenzyme. Formation of the active enzyme involves a self-maturation process in which the active site pyruvoyl group is generated from an internal serine residue via an autocatalytic post-translational modification. Two non-identical subunits are generated from the proenzyme in this reaction, and the pyruvate is formed at the N-terminus of the alpha chain, which is derived from the carboxyl end of the proenzyme. The post-translation cleavage follows an unusual pathway, termed non-hydrolytic serinolysis, in which the side chain hydroxyl group of the serine supplies its oxygen atom to form the C-terminus of the beta chain, while the remainder of the serine residue undergoes an oxidative deamination to produce ammonia and the pyruvoyl group blocking the N-terminus of the alpha chain.

It catalyses the reaction S-adenosyl-L-methionine + H(+) = S-adenosyl 3-(methylsulfanyl)propylamine + CO2. It participates in amine and polyamine biosynthesis; S-adenosylmethioninamine biosynthesis; S-adenosylmethioninamine from S-adenosyl-L-methionine: step 1/1. In terms of biological role, catalyzes the decarboxylation of S-adenosylmethionine to S-adenosylmethioninamine (dcAdoMet), the propylamine donor required for the synthesis of the polyamines spermine and spermidine from the diamine putrescine. This Thermomicrobium roseum (strain ATCC 27502 / DSM 5159 / P-2) protein is S-adenosylmethionine decarboxylase proenzyme.